We begin with the raw amino-acid sequence, 357 residues long: Anthranilate phosphoribosyltransferase (357 aa).

5-phospho-alpha-D-ribose 1-diphosphate is bound by residues G94, 97 to 98, T102, 104 to 107, 122 to 130, and G134; these read GD, NLST, and KHGNRAASS. G94 serves as a coordination point for anthranilate. Position 106 (S106) interacts with Mg(2+). Anthranilate is bound at residue N125. Anthranilate is bound at residue R180. Mg(2+) contacts are provided by D238 and E239.

Belongs to the anthranilate phosphoribosyltransferase family. Homodimer. The cofactor is Mg(2+).

The enzyme catalyses N-(5-phospho-beta-D-ribosyl)anthranilate + diphosphate = 5-phospho-alpha-D-ribose 1-diphosphate + anthranilate. It functions in the pathway amino-acid biosynthesis; L-tryptophan biosynthesis; L-tryptophan from chorismate: step 2/5. Its function is as follows. Catalyzes the transfer of the phosphoribosyl group of 5-phosphorylribose-1-pyrophosphate (PRPP) to anthranilate to yield N-(5'-phosphoribosyl)-anthranilate (PRA). The chain is Anthranilate phosphoribosyltransferase from Mycobacterium sp. (strain KMS).